A 554-amino-acid chain; its full sequence is Phosphomethylpyrimidine synthase (554 aa).

Substrate-binding positions include Asn-191, Met-220, Tyr-249, His-285, 305 to 307, 346 to 349, and Glu-385; these read SRG and DGLR. His-389 is a Zn(2+) binding site. Tyr-412 serves as a coordination point for substrate. Zn(2+) is bound at residue His-453. [4Fe-4S] cluster is bound by residues Cys-533, Cys-536, and Cys-541.

The protein belongs to the ThiC family. As to quaternary structure, homodimer. It depends on [4Fe-4S] cluster as a cofactor.

It carries out the reaction 5-amino-1-(5-phospho-beta-D-ribosyl)imidazole + S-adenosyl-L-methionine = 4-amino-2-methyl-5-(phosphooxymethyl)pyrimidine + CO + 5'-deoxyadenosine + formate + L-methionine + 3 H(+). It functions in the pathway cofactor biosynthesis; thiamine diphosphate biosynthesis. Its function is as follows. Catalyzes the synthesis of the hydroxymethylpyrimidine phosphate (HMP-P) moiety of thiamine from aminoimidazole ribotide (AIR) in a radical S-adenosyl-L-methionine (SAM)-dependent reaction. The polypeptide is Phosphomethylpyrimidine synthase (Ehrlichia chaffeensis (strain ATCC CRL-10679 / Arkansas)).